Reading from the N-terminus, the 412-residue chain is Multifunctional CCA protein (412 aa).

ATP is bound by residues glycine 8 and arginine 11. CTP-binding residues include glycine 8 and arginine 11. Residues aspartate 21 and aspartate 23 each coordinate Mg(2+). 3 residues coordinate ATP: arginine 91, arginine 137, and arginine 140. The CTP site is built by arginine 91, arginine 137, and arginine 140. The 102-residue stretch at 228–329 (TGIHTMMVLE…VKLFDKADFW (102 aa)) folds into the HD domain.

It belongs to the tRNA nucleotidyltransferase/poly(A) polymerase family. Bacterial CCA-adding enzyme type 1 subfamily. As to quaternary structure, monomer. Can also form homodimers and oligomers. Mg(2+) serves as cofactor. The cofactor is Ni(2+).

It catalyses the reaction a tRNA precursor + 2 CTP + ATP = a tRNA with a 3' CCA end + 3 diphosphate. The enzyme catalyses a tRNA with a 3' CCA end + 2 CTP + ATP = a tRNA with a 3' CCACCA end + 3 diphosphate. In terms of biological role, catalyzes the addition and repair of the essential 3'-terminal CCA sequence in tRNAs without using a nucleic acid template. Adds these three nucleotides in the order of C, C, and A to the tRNA nucleotide-73, using CTP and ATP as substrates and producing inorganic pyrophosphate. tRNA 3'-terminal CCA addition is required both for tRNA processing and repair. Also involved in tRNA surveillance by mediating tandem CCA addition to generate a CCACCA at the 3' terminus of unstable tRNAs. While stable tRNAs receive only 3'-terminal CCA, unstable tRNAs are marked with CCACCA and rapidly degraded. This chain is Multifunctional CCA protein, found in Shewanella pealeana (strain ATCC 700345 / ANG-SQ1).